The following is a 215-amino-acid chain: MNKYNIYVDHTLLKADASLEEIHKLCEEAEENEFYSVCINPCFVKVAKHYLLETSVKICTVIGFPLGANTIETKVFETKNAIDLGADEIDMVININQLINGNREYCLNEINQIKEVCGDKILKVIVETAFLNREQKEFAAKIILESNADFIKTSTGFAKEGAKLEDIILWKRILGDVKQIKASGGIKNFEDFKSFIEAGATRIGTSSAIKILNNH.

Catalysis depends on D90, which acts as the Proton donor/acceptor. Catalysis depends on K152, which acts as the Schiff-base intermediate with acetaldehyde. K181 acts as the Proton donor/acceptor in catalysis.

The protein belongs to the DeoC/FbaB aldolase family. DeoC type 1 subfamily.

The protein localises to the cytoplasm. The enzyme catalyses 2-deoxy-D-ribose 5-phosphate = D-glyceraldehyde 3-phosphate + acetaldehyde. The protein operates within carbohydrate degradation; 2-deoxy-D-ribose 1-phosphate degradation; D-glyceraldehyde 3-phosphate and acetaldehyde from 2-deoxy-alpha-D-ribose 1-phosphate: step 2/2. Functionally, catalyzes a reversible aldol reaction between acetaldehyde and D-glyceraldehyde 3-phosphate to generate 2-deoxy-D-ribose 5-phosphate. The chain is Deoxyribose-phosphate aldolase from Ureaplasma parvum serovar 3 (strain ATCC 27815 / 27 / NCTC 11736).